The primary structure comprises 384 residues: Spermidine/putrescine import ATP-binding protein PotA (384 aa).

An ABC transporter domain is found at 6–238 (ITFNNVSKTF…PINHFVANFI (233 aa)). 40-47 (GASGSGKS) provides a ligand contact to ATP.

It belongs to the ABC transporter superfamily. Spermidine/putrescine importer (TC 3.A.1.11.1) family. In terms of assembly, the complex is composed of two ATP-binding proteins (PotA), two transmembrane proteins (PotB and PotC) and a solute-binding protein (PotD).

Its subcellular location is the cell membrane. The catalysed reaction is ATP + H2O + polyamine-[polyamine-binding protein]Side 1 = ADP + phosphate + polyamineSide 2 + [polyamine-binding protein]Side 1.. Its function is as follows. Part of the ABC transporter complex PotABCD involved in spermidine/putrescine import. Responsible for energy coupling to the transport system. The sequence is that of Spermidine/putrescine import ATP-binding protein PotA from Streptococcus pyogenes serotype M12 (strain MGAS2096).